The chain runs to 428 residues: Enolase (428 aa).

Q163 contributes to the (2R)-2-phosphoglycerate binding site. E205 acts as the Proton donor in catalysis. Mg(2+) contacts are provided by D242, E286, and D313. Positions 338, 367, 368, and 389 each coordinate (2R)-2-phosphoglycerate. Residue K338 is the Proton acceptor of the active site.

The protein belongs to the enolase family. Mg(2+) is required as a cofactor.

The protein resides in the cytoplasm. Its subcellular location is the secreted. The protein localises to the cell surface. It catalyses the reaction (2R)-2-phosphoglycerate = phosphoenolpyruvate + H2O. The protein operates within carbohydrate degradation; glycolysis; pyruvate from D-glyceraldehyde 3-phosphate: step 4/5. Functionally, catalyzes the reversible conversion of 2-phosphoglycerate (2-PG) into phosphoenolpyruvate (PEP). It is essential for the degradation of carbohydrates via glycolysis. The protein is Enolase of Bordetella bronchiseptica (strain ATCC BAA-588 / NCTC 13252 / RB50) (Alcaligenes bronchisepticus).